Reading from the N-terminus, the 193-residue chain is 3-isopropylmalate dehydratase small subunit (193 aa).

The protein belongs to the LeuD family. LeuD type 1 subfamily. In terms of assembly, heterodimer of LeuC and LeuD.

The catalysed reaction is (2R,3S)-3-isopropylmalate = (2S)-2-isopropylmalate. Its pathway is amino-acid biosynthesis; L-leucine biosynthesis; L-leucine from 3-methyl-2-oxobutanoate: step 2/4. Functionally, catalyzes the isomerization between 2-isopropylmalate and 3-isopropylmalate, via the formation of 2-isopropylmaleate. The polypeptide is 3-isopropylmalate dehydratase small subunit (Listeria monocytogenes serotype 4b (strain CLIP80459)).